The chain runs to 1058 residues: Isoleucine--tRNA ligase (1058 aa).

The 'HIGH' region motif lies at 48-58 (PYTTGHIHLGT). The 'KMSKS' region signature appears at 596 to 600 (KMSKS). An ATP-binding site is contributed by lysine 599.

Belongs to the class-I aminoacyl-tRNA synthetase family. IleS type 2 subfamily. As to quaternary structure, monomer. Zn(2+) is required as a cofactor.

Its subcellular location is the cytoplasm. The catalysed reaction is tRNA(Ile) + L-isoleucine + ATP = L-isoleucyl-tRNA(Ile) + AMP + diphosphate. Catalyzes the attachment of isoleucine to tRNA(Ile). As IleRS can inadvertently accommodate and process structurally similar amino acids such as valine, to avoid such errors it has two additional distinct tRNA(Ile)-dependent editing activities. One activity is designated as 'pretransfer' editing and involves the hydrolysis of activated Val-AMP. The other activity is designated 'posttransfer' editing and involves deacylation of mischarged Val-tRNA(Ile). In Methanosarcina mazei (strain ATCC BAA-159 / DSM 3647 / Goe1 / Go1 / JCM 11833 / OCM 88) (Methanosarcina frisia), this protein is Isoleucine--tRNA ligase.